Consider the following 338-residue polypeptide: GDSL esterase/lipase At5g63170 (338 aa).

The signal sequence occupies residues 1 to 23 (MNSLVIQTTIVLVSVISVSIVHA). Catalysis depends on Ser35, which acts as the Nucleophile. Residues Asp313 and His316 contribute to the active site.

The protein belongs to the 'GDSL' lipolytic enzyme family.

The protein localises to the secreted. This Arabidopsis thaliana (Mouse-ear cress) protein is GDSL esterase/lipase At5g63170.